The chain runs to 342 residues: MTNGYIGSYTKKNGKGIYRFELNENQSRIDLLETGFELEASTYLVRNNEVLYGINKEGEQCGVASLKIDDNGELHLLNKCLSSKAGTGCYVSISEDKRYLFEAVYGDGIIRMYELNTHTGEIIRLIQELAHDFPTGTHERQDHPHAHYINQTPDGKYVAVTDLGADRIVTYKFDDNGFEFYKESLFKDSDGTRHIEFHDNGKFAYVVHELSNTVSVAEYNDGKFEELERHLTIPESFDGDTKLAAVRLSHDQQFLYVSNRGHDSIAIFKVLDNGQHLELVTITESGGQFPRDFNIASSDDLLVCAHEQGDSVVTVFERNKETGKITLCDNTRVASEGVCVIF.

It belongs to the cycloisomerase 2 family.

This is an uncharacterized protein from Staphylococcus aureus (strain bovine RF122 / ET3-1).